We begin with the raw amino-acid sequence, 498 residues long: Pup deamidase/depupylase (498 aa).

Residue Gly6 to Glu10 coordinates ATP. 2 residues coordinate Mg(2+): Glu8 and Tyr93. The active-site Proton acceptor is the Asp95. Glu100 serves as a coordination point for Mg(2+). Ser102 to Ala103 contributes to the ATP binding site. His156 serves as a coordination point for Mg(2+). 2 residues coordinate ATP: Asn158 and Arg240. Mg(2+) is bound at residue His242.

The protein belongs to the Pup ligase/Pup deamidase family. Pup deamidase subfamily. ATP serves as cofactor.

The catalysed reaction is [prokaryotic ubiquitin-like protein]-C-terminal-L-glutamine + H2O = [prokaryotic ubiquitin-like protein]-C-terminal-L-glutamate + NH4(+). The protein operates within protein degradation; proteasomal Pup-dependent pathway. Functionally, specifically catalyzes the deamidation of the C-terminal glutamine of the prokaryotic ubiquitin-like protein Pup to glutamate, thereby rendering Pup competent for conjugation. Probably also displays depupylase (DPUP) activity, removing conjugated Pup from target proteins; thus may be involved in the recycling of Pup and may function similarly to deubiquitinases (DUBs) in eukaryotes to prevent or promote proteasomal degradation of certain proteins. This Mycolicibacterium smegmatis (strain ATCC 700084 / mc(2)155) (Mycobacterium smegmatis) protein is Pup deamidase/depupylase (dop).